Reading from the N-terminus, the 886-residue chain is DNA mismatch repair protein MutS (886 aa).

641–648 (GPNMAGKS) is a binding site for ATP.

The protein belongs to the DNA mismatch repair MutS family.

This protein is involved in the repair of mismatches in DNA. It is possible that it carries out the mismatch recognition step. This protein has a weak ATPase activity. This chain is DNA mismatch repair protein MutS, found in Rickettsia akari (strain Hartford).